The following is a 531-amino-acid chain: Type 2 DNA topoisomerase 6 subunit B (531 aa).

ATP-binding positions include N42, D76, 97 to 98, 106 to 113, and K427; these read SK and GMYGLGVK.

It belongs to the TOP6B family. As to quaternary structure, homodimer. Heterotetramer of two Top6A and two Top6B chains.

It carries out the reaction ATP-dependent breakage, passage and rejoining of double-stranded DNA.. Its function is as follows. Relaxes both positive and negative superturns and exhibits a strong decatenase activity. This Metallosphaera sedula (strain ATCC 51363 / DSM 5348 / JCM 9185 / NBRC 15509 / TH2) protein is Type 2 DNA topoisomerase 6 subunit B.